Reading from the N-terminus, the 533-residue chain is Thromboxane-A synthase (533 aa).

Residues M1 to E10 are Cytoplasmic-facing. The chain crosses the membrane as a helical span at residues V11–Y31. The Lumenal portion of the chain corresponds to S32–G75. Residues P76 to I96 form a helical membrane-spanning segment. Over K97 to R223 the chain is Cytoplasmic. The helical transmembrane segment at P224 to P244 threads the bilayer. Topologically, residues N245–A335 are lumenal. A helical membrane pass occupies residues F336 to L356. At L357–R533 the chain is on the cytoplasmic side. C479 contacts heme.

Belongs to the cytochrome P450 family. As to quaternary structure, monomer. Heme is required as a cofactor. In terms of tissue distribution, expressed primarily in lung, kidney, and spleen.

It localises to the endoplasmic reticulum membrane. The catalysed reaction is prostaglandin H2 = thromboxane A2. It carries out the reaction prostaglandin H2 = (12S)-hydroxy-(5Z,8E,10E)-heptadecatrienoate + malonaldehyde. It catalyses the reaction a hydroperoxyeicosatetraenoate = an oxoeicosatetraenoate + H2O. The enzyme catalyses (15S)-hydroperoxy-(5Z,8Z,11Z,13E)-eicosatetraenoate = 15-oxo-(5Z,8Z,11Z,13E)-eicosatetraenoate + H2O. The catalysed reaction is (15S)-hydroperoxy-(5Z,8Z,11Z,13E)-eicosatetraenoate + AH2 = (15S)-hydroxy-(5Z,8Z,11Z,13E)-eicosatetraenoate + A + H2O. Functionally, catalyzes the conversion of prostaglandin H2 (PGH2) to thromboxane A2 (TXA2), a potent inducer of blood vessel constriction and platelet aggregation. Also cleaves PGH2 to 12-hydroxy-heptadecatrienoicacid (12-HHT) and malondialdehyde, which is known to act as a mediator of DNA damage. 12-HHT and malondialdehyde are formed stoichiometrically in the same amounts as TXA2. Additionally, displays dehydratase activity, toward (15S)-hydroperoxy-(5Z,8Z,11Z,13E)-eicosatetraenoate (15(S)-HPETE) producing 15-KETE and 15-HETE. The chain is Thromboxane-A synthase (Tbxas1) from Mus musculus (Mouse).